The primary structure comprises 385 residues: Arginine biosynthesis bifunctional protein ArgJ (385 aa).

Positions 142, 168, 179, 259, 380, and 385 each coordinate substrate. Catalysis depends on Thr-179, which acts as the Nucleophile.

This sequence belongs to the ArgJ family. As to quaternary structure, heterotetramer of two alpha and two beta chains.

It localises to the cytoplasm. It carries out the reaction N(2)-acetyl-L-ornithine + L-glutamate = N-acetyl-L-glutamate + L-ornithine. The catalysed reaction is L-glutamate + acetyl-CoA = N-acetyl-L-glutamate + CoA + H(+). It participates in amino-acid biosynthesis; L-arginine biosynthesis; L-ornithine and N-acetyl-L-glutamate from L-glutamate and N(2)-acetyl-L-ornithine (cyclic): step 1/1. The protein operates within amino-acid biosynthesis; L-arginine biosynthesis; N(2)-acetyl-L-ornithine from L-glutamate: step 1/4. Catalyzes two activities which are involved in the cyclic version of arginine biosynthesis: the synthesis of N-acetylglutamate from glutamate and acetyl-CoA as the acetyl donor, and of ornithine by transacetylation between N(2)-acetylornithine and glutamate. This Leptospira interrogans serogroup Icterohaemorrhagiae serovar Lai (strain 56601) protein is Arginine biosynthesis bifunctional protein ArgJ.